The following is a 374-amino-acid chain: Dual-specificity RNA methyltransferase RlmN (374 aa).

The Proton acceptor role is filled by E91. One can recognise a Radical SAM core domain in the interval 97–340 (EDDRGTLCIS…TTVRKTRGDD (244 aa)). The cysteines at positions 104 and 345 are disulfide-linked. The [4Fe-4S] cluster site is built by C111, C115, and C118. Residues 165–166 (GE), S197, 219–221 (SLH), and N302 each bind S-adenosyl-L-methionine. C345 serves as the catalytic S-methylcysteine intermediate.

The protein belongs to the radical SAM superfamily. RlmN family. [4Fe-4S] cluster is required as a cofactor.

It is found in the cytoplasm. It carries out the reaction adenosine(2503) in 23S rRNA + 2 reduced [2Fe-2S]-[ferredoxin] + 2 S-adenosyl-L-methionine = 2-methyladenosine(2503) in 23S rRNA + 5'-deoxyadenosine + L-methionine + 2 oxidized [2Fe-2S]-[ferredoxin] + S-adenosyl-L-homocysteine. It catalyses the reaction adenosine(37) in tRNA + 2 reduced [2Fe-2S]-[ferredoxin] + 2 S-adenosyl-L-methionine = 2-methyladenosine(37) in tRNA + 5'-deoxyadenosine + L-methionine + 2 oxidized [2Fe-2S]-[ferredoxin] + S-adenosyl-L-homocysteine. Its function is as follows. Specifically methylates position 2 of adenine 2503 in 23S rRNA and position 2 of adenine 37 in tRNAs. m2A2503 modification seems to play a crucial role in the proofreading step occurring at the peptidyl transferase center and thus would serve to optimize ribosomal fidelity. The protein is Dual-specificity RNA methyltransferase RlmN of Acidovorax sp. (strain JS42).